Reading from the N-terminus, the 173-residue chain is dCTP deaminase, dUMP-forming (173 aa).

DCTP contacts are provided by residues 93–98 (RSSIGR), aspartate 111, 119–121 (TLE), and glutamine 138. Catalysis depends on glutamate 121, which acts as the Proton donor/acceptor.

This sequence belongs to the dCTP deaminase family. In terms of assembly, homotrimer.

It catalyses the reaction dCTP + 2 H2O = dUMP + NH4(+) + diphosphate. It participates in pyrimidine metabolism; dUMP biosynthesis; dUMP from dCTP: step 1/1. Functionally, bifunctional enzyme that catalyzes both the deamination of dCTP to dUTP and the hydrolysis of dUTP to dUMP without releasing the toxic dUTP intermediate. In Leptospira borgpetersenii serovar Hardjo-bovis (strain JB197), this protein is dCTP deaminase, dUMP-forming.